The following is a 142-amino-acid chain: Large ribosomal subunit protein bL17 (142 aa).

Belongs to the bacterial ribosomal protein bL17 family. Part of the 50S ribosomal subunit. Contacts protein L32.

The polypeptide is Large ribosomal subunit protein bL17 (Bartonella henselae (strain ATCC 49882 / DSM 28221 / CCUG 30454 / Houston 1) (Rochalimaea henselae)).